The primary structure comprises 221 residues: Ribonuclease 3 (221 aa).

An RNase III domain is found at 4–121 (LEQLEKKLGY…LWAAVYIDSG (118 aa)). E40 contributes to the Mg(2+) binding site. D44 is an active-site residue. Positions 107 and 110 each coordinate Mg(2+). E110 is an active-site residue. In terms of domain architecture, DRBM spans 151 to 219 (DYKTILQEIT…AEELIKLLEE (69 aa)).

It belongs to the ribonuclease III family. In terms of assembly, homodimer. It depends on Mg(2+) as a cofactor.

Its subcellular location is the cytoplasm. It carries out the reaction Endonucleolytic cleavage to 5'-phosphomonoester.. Functionally, digests double-stranded RNA. Involved in the processing of primary rRNA transcript to yield the immediate precursors to the large and small rRNAs (23S and 16S). Also processes some mRNAs, and tRNAs when they are encoded in the rRNA operon. Probably processes pre-crRNA and tracrRNA of type II CRISPR loci if present in the organism. The chain is Ribonuclease 3 (rnc) from Aquifex aeolicus (strain VF5).